The chain runs to 429 residues: Eukaryotic translation initiation factor 5 (429 aa).

Ser-10 is subject to Phosphoserine. 27–34 (GKGNGIKT) is a binding site for GTP. Residues 143 to 216 (KNPPENSDIG…EEAQRRRMDE (74 aa)) are disordered. Over residues 153–170 (TGKKEKEKKNRKGKDKEN) the composition is skewed to basic and acidic residues. Residues 178–187 (TPPPPPPNEI) show a composition bias toward pro residues. The segment covering 194–207 (EEEEDDDWGEDTTE) has biased composition (acidic residues). The residue at position 225 (Thr-225) is a Phosphothreonine. Ser-227, Ser-387, Ser-388, and Ser-408 each carry phosphoserine. Residues 231–390 (ERTVEERVNI…KEAEEESSGG (160 aa)) enclose the W2 domain. Glycyl lysine isopeptide (Lys-Gly) (interchain with G-Cter in SUMO2) cross-links involve residues Lys-411 and Lys-416. Ser-417 carries the post-translational modification Phosphoserine.

It belongs to the eIF-2-beta/eIF-5 family. As to quaternary structure, component of the 43S pre-initiation complex (43S PIC), which is composed of the 40S ribosomal subunit, EIF1, eIF1A (EIF1AX), eIF3 complex, EIF5 and eIF2-GTP-initiator tRNA complex (eIF2 ternary complex). Interacts with eIF1A (EIF1AX) during scanning. Interacts through its C-terminal domain (CTD) with EIF1 or with eIF2-beta (EIF2S2) (mutually exclusive) through a common binding site. Interacts through its C-terminal domain (CTD) with the CTD of EIF5B. Interacts with FMR1 isoform 6; this interaction occurs in a RNA-dependent manner.

The protein localises to the cytoplasm. Functionally, component of the 43S pre-initiation complex (43S PIC), which binds to the mRNA cap-proximal region, scans mRNA 5'-untranslated region, and locates the initiation codon. In this complex, acts as a GTPase-activating protein, by promoting GTP hydrolysis by eIF2G (EIF2S3). During scanning, interacts with both EIF1 (via its C-terminal domain (CTD)) and EIF1A (via its NTD). This interaction with EIF1A contributes to the maintenance of EIF1 within the open 43S PIC. When start codon is recognized, EIF5, via its NTD, induces eIF2G (EIF2S3) to hydrolyze the GTP. Start codon recognition also induces a conformational change of the PIC to a closed state. This change increases the affinity of EIF5-CTD for EIF2-beta (EIF2S2), which allows the release, by an indirect mechanism, of EIF1 from the PIC. Finally, EIF5 stabilizes the PIC in its closed conformation. This Rattus norvegicus (Rat) protein is Eukaryotic translation initiation factor 5 (Eif5).